Here is a 145-residue protein sequence, read N- to C-terminus: MIALIQRVTRASVTVEDEVTGEIGPGLLVLLGVEKEDDEQKANRLCERVLGYRIFSDADGKMNLNVQQAGGSVLVVSQFTLAADTERGMRPSFSGGAAPDRAQALYEYFVERCRQQAINTQTGRFAADMQVELVNDGPVTFWLQV.

The Gly-cisPro motif, important for rejection of L-amino acids signature appears at 137 to 138 (GP).

The protein belongs to the DTD family. In terms of assembly, homodimer.

The protein resides in the cytoplasm. It carries out the reaction glycyl-tRNA(Ala) + H2O = tRNA(Ala) + glycine + H(+). The catalysed reaction is a D-aminoacyl-tRNA + H2O = a tRNA + a D-alpha-amino acid + H(+). Functionally, an aminoacyl-tRNA editing enzyme that deacylates mischarged D-aminoacyl-tRNAs. Also deacylates mischarged glycyl-tRNA(Ala), protecting cells against glycine mischarging by AlaRS. Acts via tRNA-based rather than protein-based catalysis; rejects L-amino acids rather than detecting D-amino acids in the active site. By recycling D-aminoacyl-tRNA to D-amino acids and free tRNA molecules, this enzyme counteracts the toxicity associated with the formation of D-aminoacyl-tRNA entities in vivo and helps enforce protein L-homochirality. This Salmonella choleraesuis (strain SC-B67) protein is D-aminoacyl-tRNA deacylase.